Here is a 114-residue protein sequence, read N- to C-terminus: Nucleoid-associated protein Amet_4780 (114 aa).

The disordered stretch occupies residues 23-42; it reads QKMQKDMEKTQAALEEKEVE. Positions 25–42 are enriched in basic and acidic residues; that stretch reads MQKDMEKTQAALEEKEVE.

Belongs to the YbaB/EbfC family. Homodimer.

The protein localises to the cytoplasm. The protein resides in the nucleoid. Binds to DNA and alters its conformation. May be involved in regulation of gene expression, nucleoid organization and DNA protection. This Alkaliphilus metalliredigens (strain QYMF) protein is Nucleoid-associated protein Amet_4780.